Consider the following 408-residue polypeptide: tRNA wybutosine-synthesizing protein 2 homolog (408 aa).

Residues serine 201, lysine 208, glutamate 248, and 276-277 (DN) contribute to the S-adenosyl-L-methionine site.

Belongs to the class I-like SAM-binding methyltransferase superfamily. TRM5/TYW2 family.

It catalyses the reaction 4-demethylwyosine(37) in tRNA(Phe) + S-adenosyl-L-methionine = 4-demethyl-7-[(3S)-3-amino-3-carboxypropyl]wyosine(37) in tRNA(Phe) + S-methyl-5'-thioadenosine + H(+). The protein operates within tRNA modification; wybutosine-tRNA(Phe) biosynthesis. S-adenosyl-L-methionine-dependent transferase that acts as a component of the wybutosine biosynthesis pathway. Wybutosine is a hyper modified guanosine with a tricyclic base found at the 3'-position adjacent to the anticodon of eukaryotic phenylalanine tRNA. Catalyzes the transfer of the alpha-amino-alpha-carboxypropyl (acp) group from S-adenosyl-L-methionine to the C-7 position of 4-demethylwyosine (imG-14) to produce wybutosine-86. The polypeptide is tRNA wybutosine-synthesizing protein 2 homolog (trmt12) (Danio rerio (Zebrafish)).